Here is a 278-residue protein sequence, read N- to C-terminus: BPI fold-containing family A member 1 (278 aa).

An N-terminal signal peptide occupies residues 1–19; it reads MFLVGSLVVLCGLLAHSTA. 4 Repeat repeats span residues 23–28, 30–36, 39–44, and 47–52; these read GLPLPL, QGPPLPL, GPPLPL, and GQLLPL. The tract at residues 23 to 52 is 4 X 6 AA repeats of G-[LPQ]-[PL]-L-P-L; the sequence is GLPLPLGQGPPLPLNQGPPLPLNQGQLLPL. Positions 112–117 are important for surfactant activity and antibacterial properties; it reads LVGGLL. 2 N-linked (GlcNAc...) asparagine glycosylation sites follow: asparagine 182 and asparagine 228. Residues cysteine 204 and cysteine 246 are joined by a disulfide bond.

Belongs to the BPI/LBP/Plunc superfamily. Plunc family. In terms of assembly, monomer. Interacts (via N-terminus) with SCNN1B, a subunit of the heterotrimeric epithelial sodium channel (ENaC); this inhibits proteolytic activation of ENaC. As to expression, detected in airway epithelia (trachea and lung) and in bronchoalveolar fluid (at protein level). Upper airways, nasopharyngeal epithelium and thymus. Highest expression in the trachea and progressive decrease from proximal (bronchial) to distal (bronchiolar) airways. No expression is detected in the terminal bronchioles, respiratory bronchioles or lung alveoli.

It localises to the secreted. Lipid-binding protein which shows high specificity for the surfactant phospholipid dipalmitoylphosphatidylcholine (DPPC). Plays a role in the innate immune responses of the upper airways. Reduces the surface tension in secretions from airway epithelia and inhibits the formation of biofilm by pathogenic Gram-negative bacteria, such as P.aeruginosa and K.pneumoniae. Negatively regulates proteolytic cleavage of SCNN1G, an event that is required for activation of the epithelial sodium channel (ENaC), and thereby contributes to airway surface liquid homeostasis and proper clearance of mucus. Plays a role in the airway inflammatory response after exposure to irritants. May attract macrophages and neutrophils. The sequence is that of BPI fold-containing family A member 1 (Bpifa1) from Mus musculus (Mouse).